The chain runs to 552 residues: Segmentation polarity homeobox protein engrailed (552 aa).

A compositionally biased stretch (low complexity) spans 93-108 (SGSGSPASCSTPASST). Disordered regions lie at residues 93 to 112 (SGSG…PLTI), 130 to 171 (THTT…TAKP), 309 to 419 (PAAP…GGKN), and 433 to 460 (DRPS…PRTA). The span at 135–151 (EEEEAEEDDDIDVDVDD) shows a compositional bias: acidic residues. Over residues 317–382 (PPLSSSASSL…SGSGVNASSP (66 aa)) the composition is skewed to low complexity. The span at 446-457 (QPKDKTNDEKRP) shows a compositional bias: basic and acidic residues. A DNA-binding region (homeobox) is located at residues 454–513 (EKRPRTAFSSEQLARLKREFNENRYLTERRRQQLSSELGLNEAQIKIWFQNKRAKIKKST).

This sequence belongs to the engrailed homeobox family. In terms of processing, phosphorylated. Phosphorylation may directly or allosterically modify its function.

The protein resides in the nucleus. In terms of biological role, this protein specifies the body segmentation pattern. It is required for the development of the central nervous system. Transcriptional regulator that represses activated promoters. Wg signaling operates by inactivating the SGG repression of EN autoactivation. This chain is Segmentation polarity homeobox protein engrailed (en), found in Drosophila melanogaster (Fruit fly).